Here is a 187-residue protein sequence, read N- to C-terminus: ATP synthase subunit b (187 aa).

The chain crosses the membrane as a helical span at residues 32-52 (NILDTNLINLAIIITVLFVFG).

The protein belongs to the ATPase B chain family. In terms of assembly, F-type ATPases have 2 components, F(1) - the catalytic core - and F(0) - the membrane proton channel. F(1) has five subunits: alpha(3), beta(3), gamma(1), delta(1), epsilon(1). F(0) has four main subunits: a(1), b(1), b'(1) and c(10-14). The alpha and beta chains form an alternating ring which encloses part of the gamma chain. F(1) is attached to F(0) by a central stalk formed by the gamma and epsilon chains, while a peripheral stalk is formed by the delta, b and b' chains.

The protein resides in the cellular thylakoid membrane. In terms of biological role, f(1)F(0) ATP synthase produces ATP from ADP in the presence of a proton or sodium gradient. F-type ATPases consist of two structural domains, F(1) containing the extramembraneous catalytic core and F(0) containing the membrane proton channel, linked together by a central stalk and a peripheral stalk. During catalysis, ATP synthesis in the catalytic domain of F(1) is coupled via a rotary mechanism of the central stalk subunits to proton translocation. Component of the F(0) channel, it forms part of the peripheral stalk, linking F(1) to F(0). The polypeptide is ATP synthase subunit b (Trichormus variabilis (strain ATCC 29413 / PCC 7937) (Anabaena variabilis)).